The chain runs to 207 residues: ATP-dependent Clp protease proteolytic subunit 1 (207 aa).

The active-site Nucleophile is the S103. H128 is an active-site residue.

It belongs to the peptidase S14 family. In terms of assembly, fourteen ClpP subunits assemble into 2 heptameric rings which stack back to back to give a disk-like structure with a central cavity, resembling the structure of eukaryotic proteasomes.

The protein localises to the cytoplasm. The catalysed reaction is Hydrolysis of proteins to small peptides in the presence of ATP and magnesium. alpha-casein is the usual test substrate. In the absence of ATP, only oligopeptides shorter than five residues are hydrolyzed (such as succinyl-Leu-Tyr-|-NHMec, and Leu-Tyr-Leu-|-Tyr-Trp, in which cleavage of the -Tyr-|-Leu- and -Tyr-|-Trp bonds also occurs).. Cleaves peptides in various proteins in a process that requires ATP hydrolysis. Has a chymotrypsin-like activity. Plays a major role in the degradation of misfolded proteins. The sequence is that of ATP-dependent Clp protease proteolytic subunit 1 from Tropheryma whipplei (strain Twist) (Whipple's bacillus).